Consider the following 322-residue polypeptide: tRNA (guanine-N(7)-)-methyltransferase (322 aa).

The S-adenosyl-L-methionine site is built by E29, E55, and D105. D105 is a catalytic residue. Residues K109 and D141 each coordinate substrate.

This sequence belongs to the class I-like SAM-binding methyltransferase superfamily. TrmB family.

It catalyses the reaction guanosine(46) in tRNA + S-adenosyl-L-methionine = N(7)-methylguanosine(46) in tRNA + S-adenosyl-L-homocysteine. It functions in the pathway tRNA modification; N(7)-methylguanine-tRNA biosynthesis. Functionally, catalyzes the formation of N(7)-methylguanine at position 46 (m7G46) in tRNA. This chain is tRNA (guanine-N(7)-)-methyltransferase, found in Deinococcus radiodurans (strain ATCC 13939 / DSM 20539 / JCM 16871 / CCUG 27074 / LMG 4051 / NBRC 15346 / NCIMB 9279 / VKM B-1422 / R1).